A 783-amino-acid polypeptide reads, in one-letter code: Galactinol--sucrose galactosyltransferase (783 aa).

This sequence belongs to the glycosyl hydrolases 36 family.

It carries out the reaction alpha-D-galactosyl-(1-&gt;3)-1D-myo-inositol + sucrose = raffinose + myo-inositol. Inhibited by Ag(2)+, Hg(2+), Zn(2+), p-chloromercuribenzoate (pCMB) and 1-deoxygalactonojirimycin. Functionally, transglycosidase operating by a ping-pong reaction mechanism. Involved in the synthesis of raffinose, a major soluble carbohydrate in seeds, roots and tubers. Specific for galactinol and p-nitrophenyl-alpha-D-galactoside as galactosyl donors. Able to utilize sucrose, lactose, 4-beta-galactobiose, N-acetyl-D-lactosamine, trehalose and lacto-N-biose as acceptors. May also act as a glycoside hydrolase. The chain is Galactinol--sucrose galactosyltransferase (RFS) from Oryza sativa subsp. japonica (Rice).